A 344-amino-acid chain; its full sequence is Arginine N-succinyltransferase (344 aa).

Leu-125 is a succinyl-CoA binding site. His-229 functions as the Proton donor in the catalytic mechanism.

Belongs to the arginine N-succinyltransferase family.

It carries out the reaction succinyl-CoA + L-arginine = N(2)-succinyl-L-arginine + CoA + H(+). It functions in the pathway amino-acid degradation; L-arginine degradation via AST pathway; L-glutamate and succinate from L-arginine: step 1/5. Its function is as follows. Catalyzes the transfer of succinyl-CoA to arginine to produce N(2)-succinylarginine. The chain is Arginine N-succinyltransferase from Escherichia coli O127:H6 (strain E2348/69 / EPEC).